A 467-amino-acid chain; its full sequence is Neurexin-1-beta (467 aa).

A signal peptide spans 1–45; that stretch reads MYQRMLRCGAELGSPGGGGGGAGGRLALLWIVPLTLSGLLGVAWG. Residues 46–391 lie on the Extracellular side of the membrane; it reads ASSLGAHHIH…EVIRESSSTT (346 aa). Positions 86-284 constitute a Laminin G-like domain; that stretch reads YIFSKGGGQI…DANIAIVGNV (199 aa). Ca(2+) is bound by residues aspartate 136 and valine 153. Asparagine 183 carries an N-linked (GlcNAc...) asparagine glycan. Residues 200 to 229 are essential for interaction with CBLN1; modulates interaction affinity with NLGN1, NLGN2 and NLGN3; prevents interaction with DAG1/alpha-dystroglycan; modulates interaction with alpha-latrotoxin; the sequence is GNNDNERLAIARQRIPYRLGRVVDEWLLDK. Ca(2+) contacts are provided by isoleucine 235 and asparagine 237. The segment at 318–380 is disordered; that stretch reads LATSTARRGN…AGGREPYPGS (63 aa). A compositionally biased stretch (polar residues) spans 324-339; that stretch reads RRGNSPTKEPVSQTTD. O-linked (Xyl...) (heparan sulfate) serine glycosylation occurs at serine 345. The helical transmembrane segment at 392–412 threads the bilayer; it reads GMVVGIVAAAALCILILLYAM. The Cytoplasmic segment spans residues 413–467; that stretch reads YKYRNRDEGSYHVDESRNYISNSAQSNGAVVKEKQPSSAKSANKNKKNKDKEYYV. The disordered stretch occupies residues 434-467; it reads NSAQSNGAVVKEKQPSSAKSANKNKKNKDKEYYV. Phosphoserine occurs at positions 449, 450, and 453.

It belongs to the neurexin family. As to quaternary structure, the cytoplasmic C-terminal region binds to CASK. Binds NLGN1, NLGN2 and NLGN3, DAG1 (alpha-dystroglycan) and alpha-latrotoxin. Binding to neuroligins is calcium-dependent, and the binding preference ranks as follow: NLGN1 &gt; NLGN4 &gt;&gt; NLGN3 &gt; NLGN2. Interacts with CBLN2 and more weakly with CBLN4. Interacts with CBLN1; interaction is CBLN1 hexamer form-dependent; CBLN1-binding is calcium-independent; isoform 1b does not interact with CBLN1. Interacts with CLSTN3. Post-translationally, O-glycosylated; contains heparan sulfate. Heparan sulfate attachment is required for synapse development by mediating interactions with neuroligins.

The protein localises to the presynaptic cell membrane. Neuronal cell surface protein involved in cell recognition and cell adhesion by forming intracellular junctions through binding to neuroligins. Plays a role in formation of synaptic junctions. Functions as part of a trans-synaptic complex by binding to cerebellins and postsynaptic GRID1. This interaction helps regulate the activity of NMDA and AMPA receptors at hippocampal synapses without affecting synapse formation. NRXN1B-CBLN2-GRID1 complex transduce presynaptic signals into postsynaptic NMDAR response. This chain is Neurexin-1-beta, found in Bos taurus (Bovine).